A 468-amino-acid chain; its full sequence is ATP synthase subunit beta (468 aa).

156–163 provides a ligand contact to ATP; that stretch reads GGAGVGKT.

The protein belongs to the ATPase alpha/beta chains family. In terms of assembly, F-type ATPases have 2 components, CF(1) - the catalytic core - and CF(0) - the membrane proton channel. CF(1) has five subunits: alpha(3), beta(3), gamma(1), delta(1), epsilon(1). CF(0) has three main subunits: a(1), b(2) and c(9-12). The alpha and beta chains form an alternating ring which encloses part of the gamma chain. CF(1) is attached to CF(0) by a central stalk formed by the gamma and epsilon chains, while a peripheral stalk is formed by the delta and b chains.

The protein resides in the cell inner membrane. It catalyses the reaction ATP + H2O + 4 H(+)(in) = ADP + phosphate + 5 H(+)(out). Functionally, produces ATP from ADP in the presence of a proton gradient across the membrane. The catalytic sites are hosted primarily by the beta subunits. The chain is ATP synthase subunit beta from Sulfurimonas denitrificans (strain ATCC 33889 / DSM 1251) (Thiomicrospira denitrificans (strain ATCC 33889 / DSM 1251)).